Here is a 284-residue protein sequence, read N- to C-terminus: tRNA-cytidine(32) 2-sulfurtransferase (284 aa).

Residues 44–49 (SGGKDS) carry the PP-loop motif motif. Positions 119, 122, and 210 each coordinate [4Fe-4S] cluster.

This sequence belongs to the TtcA family. As to quaternary structure, homodimer. The cofactor is Mg(2+). [4Fe-4S] cluster serves as cofactor.

Its subcellular location is the cytoplasm. The enzyme catalyses cytidine(32) in tRNA + S-sulfanyl-L-cysteinyl-[cysteine desulfurase] + AH2 + ATP = 2-thiocytidine(32) in tRNA + L-cysteinyl-[cysteine desulfurase] + A + AMP + diphosphate + H(+). It participates in tRNA modification. Its function is as follows. Catalyzes the ATP-dependent 2-thiolation of cytidine in position 32 of tRNA, to form 2-thiocytidine (s(2)C32). The sulfur atoms are provided by the cysteine/cysteine desulfurase (IscS) system. The protein is tRNA-cytidine(32) 2-sulfurtransferase of Chromohalobacter salexigens (strain ATCC BAA-138 / DSM 3043 / CIP 106854 / NCIMB 13768 / 1H11).